Here is a 351-residue protein sequence, read N- to C-terminus: MLGHNILTLGECDELDNHIVMCSTGLLSPQEDFSNVNAGHPNNEEAICSLCDKKIRDRFVSKVNGRCYHSSCLRCSTCKDELGATCFLREDSMYCRAHFYKKFGTKCSSCNEGIVPDHVVRKASNHVYHVECFQCFICKRSLETGEEFYLIADDARLVCKDDYEQARDKHCNELEGDGSNKRPRTTISAKSLETLKQAYQTSSKPARHVREQLASETGLDMRVVQVWFQNRRAKEKRLKKDAGRRWKSSNRAESDSNSPIESINGQSPNYLYLDHPMDDGNESNYLFHSREQTPDKYYRNETPSTDPPPMHMTTPSVLTTNFSTPLSLSTNVYNLPPPESQLIPHMTPQYI.

2 consecutive LIM zinc-binding domains span residues Ala46–Thr105 and Thr105–Lys169. The segment at residues Asn180 to Lys239 is a DNA-binding region (homeobox). The segment covering Leu238–Ser254 has biased composition (basic and acidic residues). Residues Leu238–Pro268 are disordered. Positions Asp255–Pro268 are enriched in polar residues.

Interacts (via LIM zinc-binding domains 1 and 2) with lim-7 (via LID domain). May interact with itself. May interact with homeobox protein ceh-63. In terms of tissue distribution, expressed in the anterior AFDL/R sensory neurons and BDUL/R and ALA interneurons, and in PVT, PVQL/R, DVC, PVNL/R, PVWL/R, PVR, PHCL/R, PHAL/R and PHBL/R cells in the tail region.

It localises to the nucleus. Probable transcription factor, modulating expression of helix-loop-helix protein mbr-1 and homeobox protein ceh-63, perhaps acting in concert with ceh-63. Binds to a motif including the sequence 5'-CTAAT-3' in regulatory promoter elements. Confers thermosensory function to neurons. Required for correct AFD-mediated thermotaxis. In concert with homeobox protein ttx-1, perhaps as components in a complex, specifies identity of AFD neurons, acting by synergistically regulating receptor-type guanylyl cyclase gcy-8, gcy-18 and other genes. Involved in postembryonic differentiation of the ALA neuron, and regulation of genes that contribute to behavioral quiescence, a sleep-like behavior mediated by ALA. Regulates its own expression and also that of homeodomain ceh-17, together forming an autoregulatory loop in the ALA neuron. Required for initial pathfinding of the ALA axons, but largely dispensable for axon migration. Involved in regulating postembryonic axon maintenance in the ventral nerve cord, acting in concert with LIM homeobox protein lim-6, via modulation of expression of immunoglobulin domain zig genes in the interneuron PVT. Plays a role in controlling the peptidergic identity of the BDU neurons, regulating expression of flp-10, nlp-1, and nlp-15, thereby modulating the harsh touch response. This chain is LIM/homeobox protein ceh-14 (ceh-14), found in Caenorhabditis elegans.